Reading from the N-terminus, the 583-residue chain is Phosphoglucomutase, cytoplasmic (583 aa).

A disordered region spans residues 1–20; the sequence is MANFKVSRVETTPFEGQKPG. 2 residues coordinate alpha-D-glucose 1,6-bisphosphate: Arg25 and Ser124. The active-site Phosphoserine intermediate is Ser124. Residues Ser124, Asp300, Asp302, and Asp304 each coordinate Mg(2+). A Phosphoserine modification is found at Ser124. Residues Asp304, Arg305, Thr368, Glu387, Ser389, and Lys400 each coordinate alpha-D-glucose 1,6-bisphosphate.

The protein belongs to the phosphohexose mutase family. Monomer. Mg(2+) is required as a cofactor.

The protein localises to the cytoplasm. It carries out the reaction alpha-D-glucose 1-phosphate = alpha-D-glucose 6-phosphate. The catalysed reaction is O-phospho-L-seryl-[protein] + alpha-D-glucose 1-phosphate = alpha-D-glucose 1,6-bisphosphate + L-seryl-[protein]. The enzyme catalyses alpha-D-glucose 1,6-bisphosphate + L-seryl-[protein] = O-phospho-L-seryl-[protein] + alpha-D-glucose 6-phosphate. Functionally, catalyzes the reversible isomerization of alpha-D-glucose 1-phosphate to alpha-D-glucose 6-phosphate. The mechanism proceeds via the intermediate compound alpha-D-glucose 1,6-bisphosphate. This enzyme participates in both the breakdown and synthesis of glucose. The polypeptide is Phosphoglucomutase, cytoplasmic (PGM1) (Solanum tuberosum (Potato)).